Consider the following 206-residue polypeptide: dITP/XTP pyrophosphatase (206 aa).

7–12 (SSHGYK) contacts substrate. D70 (proton acceptor) is an active-site residue. D70 provides a ligand contact to Mg(2+). Residues T71, 154–157 (FGYD), K177, and 182–183 (HR) contribute to the substrate site.

It belongs to the HAM1 NTPase family. Homodimer. The cofactor is Mg(2+).

The catalysed reaction is XTP + H2O = XMP + diphosphate + H(+). The enzyme catalyses dITP + H2O = dIMP + diphosphate + H(+). It catalyses the reaction ITP + H2O = IMP + diphosphate + H(+). Its function is as follows. Pyrophosphatase that catalyzes the hydrolysis of nucleoside triphosphates to their monophosphate derivatives, with a high preference for the non-canonical purine nucleotides XTP (xanthosine triphosphate), dITP (deoxyinosine triphosphate) and ITP. Seems to function as a house-cleaning enzyme that removes non-canonical purine nucleotides from the nucleotide pool, thus preventing their incorporation into DNA/RNA and avoiding chromosomal lesions. This is dITP/XTP pyrophosphatase from Chlamydia abortus (strain DSM 27085 / S26/3) (Chlamydophila abortus).